The primary structure comprises 316 residues: KRR1 small subunit processome component (316 aa).

The region spanning 122 to 192 (ACDVIKIGNF…VRRVVEDCMK (71 aa)) is the KH domain. Residues 279–304 (KKLNEQKEKQMEREIERQEERAKDFI) are compositionally biased toward basic and acidic residues. The interval 279 to 316 (KKLNEQKEKQMEREIERQEERAKDFIAPEEEAYKPNQN) is disordered.

This sequence belongs to the KRR1 family. As to quaternary structure, component of the ribosomal small subunit (SSU) processome composed of at least 40 protein subunits and snoRNA U3. Interacts with snoRNA U3. Interacts with MPP10, KRI1 and with ribosomal proteins RPS1A, RPS4A, RPS4B, RPS8A, RPS8B, RPS11A, RPS11B, RPS13, RPS24, RPS25, RPL4A, RPL7B, RPL8, RPL23, RPL25 and RPL28.

It localises to the nucleus. The protein resides in the nucleolus. Functionally, required for 40S ribosome biogenesis. Involved in nucleolar processing of pre-18S ribosomal RNA and ribosome assembly. Essential for vegetative growth. In Saccharomyces cerevisiae (strain RM11-1a) (Baker's yeast), this protein is KRR1 small subunit processome component.